Consider the following 109-residue polypeptide: Probable endoribonuclease MazF5 (109 aa).

This sequence belongs to the PemK/MazF family. As to quaternary structure, forms a complex with cognate antitoxin MazE5.

Its function is as follows. Toxic component of a type II toxin-antitoxin (TA) system. Upon expression in M.smegmatis inhibits colony formation. Its toxic effect is neutralized by coexpression with cognate antitoxin MazE5. Probably an endoribonuclease. This is Probable endoribonuclease MazF5 (mazF5) from Mycobacterium tuberculosis (strain ATCC 25618 / H37Rv).